A 486-amino-acid chain; its full sequence is N-succinylglutamate 5-semialdehyde dehydrogenase (486 aa).

220–225 (GSSRTG) serves as a coordination point for NAD(+). Residues E243 and C277 contribute to the active site.

This sequence belongs to the aldehyde dehydrogenase family. AstD subfamily.

It carries out the reaction N-succinyl-L-glutamate 5-semialdehyde + NAD(+) + H2O = N-succinyl-L-glutamate + NADH + 2 H(+). It participates in amino-acid degradation; L-arginine degradation via AST pathway; L-glutamate and succinate from L-arginine: step 4/5. Functionally, catalyzes the NAD-dependent reduction of succinylglutamate semialdehyde into succinylglutamate. This is N-succinylglutamate 5-semialdehyde dehydrogenase from Shewanella sediminis (strain HAW-EB3).